Here is a 105-residue protein sequence, read N- to C-terminus: U-scoloptoxin(10)-Sm3a (105 aa).

A signal peptide spans 1–23 (MYKFIFIFFTVFFLINIIEESXT).

Belongs to the scoloptoxin-10 family. Post-translationally, contains 3 disulfide bonds. In terms of tissue distribution, expressed by the venom gland.

It is found in the secreted. This chain is U-scoloptoxin(10)-Sm3a, found in Scolopendra morsitans (Tanzanian blue ringleg centipede).